Here is a 216-residue protein sequence, read N- to C-terminus: GTP-binding nuclear protein Ran, testis-specific isoform (216 aa).

N-acetylalanine is present on Ala-2. Residues 7 to 171 (PQVQFKVVLV…FWLARKLIGD (165 aa)) form the Small GTPase Ran-type domain. 17–24 (GDGGTGKT) lines the GTP pocket. Phosphothreonine is present on Thr-24. Positions 37–45 (KEYVATLGV) are switch-I. At Lys-60 the chain carries N6-acetyllysine. GTP is bound at residue 65–69 (DTAGQ). Positions 68-84 (GQEKFGGLRDGYYIQAQ) are switch-II. At Lys-71 the chain carries N6-acetyllysine; alternate. Lys-71 participates in a covalent cross-link: Glycyl lysine isopeptide (Lys-Gly) (interchain with G-Cter in SUMO2); alternate. Lys-71 participates in a covalent cross-link: Glycyl lysine isopeptide (Lys-Gly) (interchain with G-Cter in ubiquitin); alternate. Lys-99 carries the post-translational modification N6-acetyllysine. Residue 122-125 (NKVD) coordinates GTP. The residue at position 134 (Lys-134) is an N6-acetyllysine. The residue at position 159 (Lys-159) is an N6-acetyllysine; alternate. Lys-159 is modified (N6-succinyllysine; alternate).

The protein belongs to the small GTPase superfamily. Ran family. Testis specific.

It is found in the nucleus. It carries out the reaction GTP + H2O = GDP + phosphate + H(+). Its function is as follows. GTP-binding protein involved in nucleocytoplasmic transport. Required for the import of protein into the nucleus and also for RNA export. Involved in chromatin condensation and control of cell cycle. In Mus musculus (Mouse), this protein is GTP-binding nuclear protein Ran, testis-specific isoform (Rasl2-9).